The sequence spans 278 residues: 4-diphosphocytidyl-2-C-methyl-D-erythritol kinase (278 aa).

Lys9 is an active-site residue. 93–103 lines the ATP pocket; that stretch reads PLGGGLGGGSS. The active site involves Asp135.

It belongs to the GHMP kinase family. IspE subfamily.

The enzyme catalyses 4-CDP-2-C-methyl-D-erythritol + ATP = 4-CDP-2-C-methyl-D-erythritol 2-phosphate + ADP + H(+). The protein operates within isoprenoid biosynthesis; isopentenyl diphosphate biosynthesis via DXP pathway; isopentenyl diphosphate from 1-deoxy-D-xylulose 5-phosphate: step 3/6. Catalyzes the phosphorylation of the position 2 hydroxy group of 4-diphosphocytidyl-2C-methyl-D-erythritol. In Nitrosomonas europaea (strain ATCC 19718 / CIP 103999 / KCTC 2705 / NBRC 14298), this protein is 4-diphosphocytidyl-2-C-methyl-D-erythritol kinase.